The sequence spans 122 residues: Probable DNA-directed RNA polymerase II subunit RPB11 (122 aa).

Belongs to the archaeal Rpo11/eukaryotic RPB11/RPC19 RNA polymerase subunit family. As to quaternary structure, component of the RNA polymerase II (Pol II) complex consisting of 12 subunits.

Its subcellular location is the nucleus. Its function is as follows. DNA-dependent RNA polymerase catalyzes the transcription of DNA into RNA using the four ribonucleoside triphosphates as substrates. Component of RNA polymerase II which synthesizes mRNA precursors and many functional non-coding RNAs. Pol II is the central component of the basal RNA polymerase II transcription machinery. It is composed of mobile elements that move relative to each other. RPB11 is part of the core element with the central large cleft. The polypeptide is Probable DNA-directed RNA polymerase II subunit RPB11 (rpb-11) (Caenorhabditis briggsae).